Consider the following 637-residue polypeptide: Chaperone protein HtpG (637 aa).

The a; substrate-binding stretch occupies residues 1–345 (MTAAQKETLG…SNDLPLNVSR (345 aa)). The b stretch occupies residues 346-562 (EILQDNKVTQ…DNDMSSQMQK (217 aa)). Positions 563–637 (LMESVGQAAP…LNKLMLELSK (75 aa)) are c.

This sequence belongs to the heat shock protein 90 family. Homodimer.

The protein localises to the cytoplasm. Molecular chaperone. Has ATPase activity. The protein is Chaperone protein HtpG of Pseudoalteromonas translucida (strain TAC 125).